The sequence spans 71 residues: Stathmin-1-B (71 aa).

A coiled-coil region spans residues 1 to 67; the sequence is KREHEKEVLQ…EIRKGKECKE (67 aa). The SLD domain occupies 1 to 71; that stretch reads KREHEKEVLQ…GKECKEPSED (71 aa).

The protein belongs to the stathmin family. Binds to two alpha/beta-tubulin heterodimers. From unphosphorylated forms to highly phosphorylated ones in the mature egg, followed by progressive dephosphorylation from the mid-blastula to the tailbud stage. Ubiquitous. Mostly abundant in brain and oocytes.

The protein resides in the cytoplasm. It is found in the cytoskeleton. Functionally, involved in the regulation of the microtubule (MT) filament system by destabilizing microtubules. It prevents assembly and promotes disassembly of microtubules. The polypeptide is Stathmin-1-B (stmn1-b) (Xenopus laevis (African clawed frog)).